Here is a 394-residue protein sequence, read N- to C-terminus: Alcohol dehydrogenase-like 3 (394 aa).

Cys48, Thr50, His71, Cys101, Cys104, Cys107, Cys115, and Cys188 together coordinate Zn(2+). 2 residues coordinate an alcohol: Thr50 and His71. Residue Thr50 coordinates NAD(+). Residues Gly213–Gly218, Asp237, Lys242, Thr283, Val306, Val306–Ile308, Phe333, and Arg383 each bind NAD(+).

Belongs to the zinc-containing alcohol dehydrogenase family. Class-III subfamily. Homodimer. Zn(2+) is required as a cofactor.

It localises to the cytoplasm. It carries out the reaction a primary alcohol + NAD(+) = an aldehyde + NADH + H(+). The catalysed reaction is a secondary alcohol + NAD(+) = a ketone + NADH + H(+). The polypeptide is Alcohol dehydrogenase-like 3 (Arabidopsis thaliana (Mouse-ear cress)).